We begin with the raw amino-acid sequence, 552 residues long: CTP synthase (552 aa).

The interval 1-270 is amidoligase domain; sequence MTKYVFVTGG…DRIICEELKL (270 aa). Residue Ser13 participates in CTP binding. Position 13 (Ser13) interacts with UTP. ATP-binding positions include 14–19 and Asp71; that span reads SLGKGI. The Mg(2+) site is built by Asp71 and Glu144. CTP contacts are provided by residues 151-153, 191-196, and Lys227; these read DIE and KTKPTQ. UTP is bound by residues 191–196 and Lys227; that span reads KTKPTQ. In terms of domain architecture, Glutamine amidotransferase type-1 spans 295–547; sequence TIGMVGKYVD…VEAALANKQA (253 aa). L-glutamine is bound at residue Gly356. Cys383 acts as the Nucleophile; for glutamine hydrolysis in catalysis. L-glutamine contacts are provided by residues 384 to 387, Glu407, and Arg473; that span reads LGMQ. Residues His520 and Glu522 contribute to the active site.

It belongs to the CTP synthase family. Homotetramer.

It carries out the reaction UTP + L-glutamine + ATP + H2O = CTP + L-glutamate + ADP + phosphate + 2 H(+). It catalyses the reaction L-glutamine + H2O = L-glutamate + NH4(+). The enzyme catalyses UTP + NH4(+) + ATP = CTP + ADP + phosphate + 2 H(+). It participates in pyrimidine metabolism; CTP biosynthesis via de novo pathway; CTP from UDP: step 2/2. Allosterically activated by GTP, when glutamine is the substrate; GTP has no effect on the reaction when ammonia is the substrate. The allosteric effector GTP functions by stabilizing the protein conformation that binds the tetrahedral intermediate(s) formed during glutamine hydrolysis. Inhibited by the product CTP, via allosteric rather than competitive inhibition. In terms of biological role, catalyzes the ATP-dependent amination of UTP to CTP with either L-glutamine or ammonia as the source of nitrogen. Regulates intracellular CTP levels through interactions with the four ribonucleotide triphosphates. The sequence is that of CTP synthase from Burkholderia ambifaria (strain MC40-6).